The following is a 362-amino-acid chain: Probable cinnamyl alcohol dehydrogenase 9 (362 aa).

Cys-45 is a binding site for Zn(2+). NADP(+) is bound at residue Ser-47. Zn(2+)-binding residues include His-67, Glu-68, Cys-98, Cys-101, Cys-104, Cys-112, and Cys-167. NADP(+) contacts are provided by residues Thr-171, 192–197 (GLGGLG), 215–220 (STSPWK), Thr-255, Gly-279, and 302–304 (SMI).

Belongs to the zinc-containing alcohol dehydrogenase family. Homodimer. Zn(2+) serves as cofactor.

The catalysed reaction is (E)-cinnamyl alcohol + NADP(+) = (E)-cinnamaldehyde + NADPH + H(+). It catalyses the reaction (E)-coniferol + NADP(+) = (E)-coniferaldehyde + NADPH + H(+). The enzyme catalyses (E)-sinapyl alcohol + NADP(+) = (E)-sinapaldehyde + NADPH + H(+). It carries out the reaction (E)-4-coumaroyl alcohol + NADP(+) = (E)-4-coumaraldehyde + NADPH + H(+). The catalysed reaction is (E)-caffeyl alcohol + NADP(+) = (E)-caffeyl aldehyde + NADPH + H(+). Its pathway is aromatic compound metabolism; phenylpropanoid biosynthesis. Involved in lignin biosynthesis. Catalyzes the final step specific for the production of lignin monomers. Catalyzes the NADPH-dependent reduction of coniferaldehyde, 5-hydroxyconiferaldehyde, sinapaldehyde, 4-coumaraldehyde and caffeyl aldehyde to their respective alcohols. The polypeptide is Probable cinnamyl alcohol dehydrogenase 9 (Oryza sativa subsp. japonica (Rice)).